The primary structure comprises 381 residues: Arrestin-C (381 aa).

It belongs to the arrestin family. In terms of assembly, homodimer; disulfide-linked in response to retinal illumination. Interacts with CXCR4; the interaction is dependent on the C-terminal phosphorylation of CXCR4 and modulates the calcium ion mobilization activity of CXCR4. Interacts with GPR84. Inner and outer segments, and the inner plexiform regions of the retina.

It is found in the photoreceptor inner segment. The protein resides in the cell projection. Its subcellular location is the cilium. It localises to the photoreceptor outer segment. In terms of biological role, may play a role in an as yet undefined retina-specific signal transduction. Could bind to photoactivated-phosphorylated red/green opsins. This Mus musculus (Mouse) protein is Arrestin-C (Arr3).